We begin with the raw amino-acid sequence, 263 residues long: Orotidine 5'-phosphate decarboxylase (263 aa).

Substrate is bound by residues aspartate 36, 58–60 (KTH), 90–99 (DRKFADIGNT), tyrosine 216, and arginine 234. Catalysis depends on lysine 92, which acts as the Proton donor.

This sequence belongs to the OMP decarboxylase family.

The catalysed reaction is orotidine 5'-phosphate + H(+) = UMP + CO2. The protein operates within pyrimidine metabolism; UMP biosynthesis via de novo pathway; UMP from orotate: step 2/2. This Komagataella pastoris (Yeast) protein is Orotidine 5'-phosphate decarboxylase (URA3).